A 459-amino-acid chain; its full sequence is Sensor histidine kinase SpaK (459 aa).

The Cytoplasmic portion of the chain corresponds to 1–18 (MGIGFKGRKTLLRELVKY). Residues 19 to 39 (MVTLCISLVVLALLYIFINTI) traverse the membrane as a helical segment. Over 40-155 (AMNTGFSHPA…RKYLPNYELT (116 aa)) the chain is Extracellular. A helical membrane pass occupies residues 156–176 (SICILIILLIIVISIITTYFA). Residues 177-459 (NRLRKHFETL…VRVKIPLRNE (283 aa)) lie on the Cytoplasmic side of the membrane. The region spanning 244 to 458 (ALAHEIKIPI…EVRVKIPLRN (215 aa)) is the Histidine kinase domain. His-247 is modified (phosphohistidine; by autocatalysis).

It localises to the cell membrane. The catalysed reaction is ATP + protein L-histidine = ADP + protein N-phospho-L-histidine.. In terms of biological role, member of the two-component regulatory system SpaK/SpaR involved in the regulation of the biosynthesis of lantibiotic subtilin. SpaK may function as a membrane-associated protein kinase that phosphorylates SpaR in response to environmental signals. In Bacillus subtilis, this protein is Sensor histidine kinase SpaK (spaK).